We begin with the raw amino-acid sequence, 373 residues long: MPGWSCLVTGAGGFLGQRIIRMLVQEKELQEVRALDKVFRPETREEFCKLQTKTKVTVLEGDILDAQCLRRACQGISVVIHTAAAIDVFGAIPRQTIIDINLKGTLNLLEACVQASVPAFIYTSSIDVAGPNSYKEIVLNGHEEQQHESTWSDPYPYSKKMAEKAVLAANGSSLKNGGTLHTCALRPMYIYGEKSPLISVTIIRAVKNSGILDVTGKFSTVNPVYVNNAAWAHILAARGLQDPRKSPNIQGQFYYISDDTPHQSYDDLNYVLSKDWGLRPDSSWRPPVALLYWLGFLLELVSFLLRPVYNYQPPFNRHLVTLSNTVFTFSYKKAQRDLGYEPLVGWEEARENTSEWIGSLVEQHKGTLNTKAQ.

Residues 10-15 (GAGGFL), Y155, and K159 each bind NADP(+). Catalysis depends on K159, which acts as the Proton donor. Residues 288-308 (VALLYWLGFLLELVSFLLRPV) traverse the membrane as a helical segment.

This sequence belongs to the 3-beta-HSD family. High levels in adrenal gland, kidney and male liver. Low levels in female liver.

It is found in the endoplasmic reticulum membrane. Its subcellular location is the mitochondrion membrane. It catalyses the reaction a 3beta-hydroxy-Delta(5)-steroid + NAD(+) = a 3-oxo-Delta(5)-steroid + NADH + H(+). It carries out the reaction pregnenolone + NAD(+) = pregn-5-ene-3,20-dione + NADH + H(+). The catalysed reaction is 3beta-hydroxyandrost-5-en-17-one + NAD(+) = androst-5-ene-3,17-dione + NADH + H(+). The enzyme catalyses androst-5-en-3beta,17beta-diol + NAD(+) = 17beta-hydroxy-androst-5-en-3-one + NADH + H(+). It catalyses the reaction a 3beta-hydroxysteroid + NADP(+) = a 3-oxosteroid + NADPH + H(+). It carries out the reaction 5alpha-androstane-3beta,17beta-diol + NADP(+) = 17beta-hydroxy-5alpha-androstan-3-one + NADPH + H(+). The catalysed reaction is 3beta-hydroxy-5alpha-androstan-17-one + NADP(+) = 5alpha-androstan-3,17-dione + NADPH + H(+). The enzyme catalyses a 3-oxo-Delta(5)-steroid = a 3-oxo-Delta(4)-steroid. It catalyses the reaction pregn-5-ene-3,20-dione = progesterone. It carries out the reaction androst-5-ene-3,17-dione = androst-4-ene-3,17-dione. The catalysed reaction is 17beta-hydroxy-androst-5-en-3-one = testosterone. The enzyme catalyses 5alpha-androstane-3beta,17beta-diol + NAD(+) = 17beta-hydroxy-5alpha-androstan-3-one + NADH + H(+). It functions in the pathway steroid hormone biosynthesis. Its pathway is steroid metabolism. A bifunctional enzyme responsible for the oxidation and isomerization of 3beta-hydroxy-Delta(5)-steroid precursors to 3-oxo-Delta(4)-steroids, an essential step in steroid hormone biosynthesis. Specifically catalyzes the conversion of pregnenolone to progesterone, 17alpha-hydroxypregnenolone to 17alpha-hydroxyprogesterone, dehydroepiandrosterone (DHEA) to 4-androstenedione, and androstenediol to testosterone. Additionally, catalyzes the interconversion between 3beta-hydroxy and 3-oxo-5alpha-androstane steroids controlling the bioavalability of the active forms. Specifically converts dihydrotestosterone to its inactive form 5alpha-androstanediol, that does not bind androgen receptor/AR. Also converts androstanedione, a precursor of testosterone and estrone, to epiandrosterone. Expected to use NAD(+) as preferred electron donor for the 3-beta-hydroxy-steroid dehydrogenase activity and NADPH for the 3-ketosteroid reductase activity. The protein is 3 beta-hydroxysteroid dehydrogenase/Delta 5--&gt;4-isomerase type 1 (HSD3B1) of Mesocricetus auratus (Golden hamster).